The following is a 378-amino-acid chain: Geraniol dehydrogenase (378 aa).

Zn(2+) contacts are provided by Cys48, His75, Cys105, Cys108, Cys111, Cys119, and Cys179.

Belongs to the zinc-containing alcohol dehydrogenase family. Monomer. It depends on Zn(2+) as a cofactor.

It carries out the reaction (2E)-geraniol + NAD(+) = (2E)-geranial + NADH + H(+). The catalysed reaction is (2E,6E)-farnesol + NAD(+) = (2E,6E)-farnesal + NADH + H(+). Catalyzes the NAD(+)-dependent oxidation of geraniol to geranial, playing an important role in the biosynthesis of neral, an alarm pheromone. Cannot use NADP(+). Also acts as a farnesol dehydrogenase by catalyzing the oxidation of (2E,6E)-farnesol to (2E,6E)-farnesal, with lower activity compared to geraniol dehydrogenase activity. The sequence is that of Geraniol dehydrogenase from Carpoglyphus lactis (Dried fruit mite).